A 599-amino-acid polypeptide reads, in one-letter code: Elongation factor 4 (599 aa).

Positions 5-187 (SHIRNFSIVA…SIVQNLPAPK (183 aa)) constitute a tr-type G domain. Residues 17–22 (DHGKST) and 134–137 (NKID) each bind GTP.

The protein belongs to the TRAFAC class translation factor GTPase superfamily. Classic translation factor GTPase family. LepA subfamily.

Its subcellular location is the cell inner membrane. The catalysed reaction is GTP + H2O = GDP + phosphate + H(+). In terms of biological role, required for accurate and efficient protein synthesis under certain stress conditions. May act as a fidelity factor of the translation reaction, by catalyzing a one-codon backward translocation of tRNAs on improperly translocated ribosomes. Back-translocation proceeds from a post-translocation (POST) complex to a pre-translocation (PRE) complex, thus giving elongation factor G a second chance to translocate the tRNAs correctly. Binds to ribosomes in a GTP-dependent manner. The polypeptide is Elongation factor 4 (Roseobacter denitrificans (strain ATCC 33942 / OCh 114) (Erythrobacter sp. (strain OCh 114))).